An 89-amino-acid polypeptide reads, in one-letter code: MAISKEKKNEIIAQYARHEGDTGSVEVQVAVLTWEINHLNSHIKQHKKDHATYRGLMKKIGHRRNLLAYLRRTDVNRYRELIQSLGLRR.

This sequence belongs to the universal ribosomal protein uS15 family. In terms of assembly, part of the 30S ribosomal subunit. Forms a bridge to the 50S subunit in the 70S ribosome, contacting the 23S rRNA.

In terms of biological role, one of the primary rRNA binding proteins, it binds directly to 16S rRNA where it helps nucleate assembly of the platform of the 30S subunit by binding and bridging several RNA helices of the 16S rRNA. Forms an intersubunit bridge (bridge B4) with the 23S rRNA of the 50S subunit in the ribosome. The chain is Small ribosomal subunit protein uS15 from Streptococcus pyogenes serotype M1.